Consider the following 463-residue polypeptide: Argininosuccinate lyase (463 aa).

It belongs to the lyase 1 family. Argininosuccinate lyase subfamily.

The protein localises to the cytoplasm. It carries out the reaction 2-(N(omega)-L-arginino)succinate = fumarate + L-arginine. The protein operates within amino-acid biosynthesis; L-arginine biosynthesis; L-arginine from L-ornithine and carbamoyl phosphate: step 3/3. This chain is Argininosuccinate lyase, found in Dinoroseobacter shibae (strain DSM 16493 / NCIMB 14021 / DFL 12).